Consider the following 341-residue polypeptide: Glycerol-3-phosphate dehydrogenase [NAD(P)+] (341 aa).

Serine 14, phenylalanine 15, arginine 35, and lysine 108 together coordinate NADPH. Residues lysine 108 and glycine 136 each contribute to the sn-glycerol 3-phosphate site. Alanine 140 is an NADPH binding site. Residues lysine 191, aspartate 244, serine 254, arginine 255, and asparagine 256 each contribute to the sn-glycerol 3-phosphate site. The active-site Proton acceptor is lysine 191. Arginine 255 lines the NADPH pocket. Residues valine 279 and glutamate 281 each contribute to the NADPH site.

It belongs to the NAD-dependent glycerol-3-phosphate dehydrogenase family.

It is found in the cytoplasm. The enzyme catalyses sn-glycerol 3-phosphate + NAD(+) = dihydroxyacetone phosphate + NADH + H(+). It carries out the reaction sn-glycerol 3-phosphate + NADP(+) = dihydroxyacetone phosphate + NADPH + H(+). It participates in membrane lipid metabolism; glycerophospholipid metabolism. In terms of biological role, catalyzes the reduction of the glycolytic intermediate dihydroxyacetone phosphate (DHAP) to sn-glycerol 3-phosphate (G3P), the key precursor for phospholipid synthesis. The sequence is that of Glycerol-3-phosphate dehydrogenase [NAD(P)+] from Pseudomonas fluorescens (strain ATCC BAA-477 / NRRL B-23932 / Pf-5).